The primary structure comprises 227 residues: uncharacterized protein (227 aa).

Residues 2 to 115 (KILMIEDNVS…TLVARIKAVI (114 aa)) enclose the Response regulatory domain. A 4-aspartylphosphate modification is found at Asp51. A DNA-binding region (ompR/PhoB-type) is located at residues 128–226 (EDMIETECFT…VWGVGYKFDE (99 aa)).

Post-translationally, phosphorylated by YclK.

It localises to the cytoplasm. Functionally, could be member of the two-component regulatory system YclK/YclJ. This is an uncharacterized protein from Bacillus subtilis (strain 168).